A 232-amino-acid chain; its full sequence is Clarin-1 (232 aa).

The chain crosses the membrane as a helical span at residues 8 to 28 (IIFCMAGVFSFACALGVVTAL). N48 is a glycosylation site (N-linked (GlcNAc...) asparagine). The next 3 membrane-spanning stretches (helical) occupy residues 101–121 (VILF…FFMY), 135–155 (LGLY…MILF), and 186–206 (TTSF…GLLI).

This sequence belongs to the clarin family. In terms of tissue distribution, widely expressed. Found in the retina.

Its subcellular location is the cell membrane. In terms of biological role, may have a role in the excitatory ribbon synapse junctions between hair cells and cochlear ganglion cells and presumably also in analogous synapses within the retina. This is Clarin-1 (CLRN1) from Homo sapiens (Human).